The chain runs to 406 residues: Bifunctional enzyme IspD/IspF (406 aa).

The tract at residues 1 to 246 is 2-C-methyl-D-erythritol 4-phosphate cytidylyltransferase; it reads MLQMPSKQPI…KLSASLLPDV (246 aa). Residues 247-406 are 2-C-methyl-D-erythritol 2,4-cyclodiphosphate synthase; sequence RTGNGYDVHQ…ATVVYRGVKR (160 aa). A divalent metal cation contacts are provided by D253 and H255. 4-CDP-2-C-methyl-D-erythritol 2-phosphate is bound by residues 253–255 and 279–280; these read DVH and HS. H287 is a binding site for a divalent metal cation. Residues 301–303, 377–380, F384, and R387 contribute to the 4-CDP-2-C-methyl-D-erythritol 2-phosphate site; these read DIG and TTNE.

The protein in the N-terminal section; belongs to the IspD/TarI cytidylyltransferase family. IspD subfamily. It in the C-terminal section; belongs to the IspF family. The cofactor is a divalent metal cation.

The catalysed reaction is 2-C-methyl-D-erythritol 4-phosphate + CTP + H(+) = 4-CDP-2-C-methyl-D-erythritol + diphosphate. It carries out the reaction 4-CDP-2-C-methyl-D-erythritol 2-phosphate = 2-C-methyl-D-erythritol 2,4-cyclic diphosphate + CMP. It functions in the pathway isoprenoid biosynthesis; isopentenyl diphosphate biosynthesis via DXP pathway; isopentenyl diphosphate from 1-deoxy-D-xylulose 5-phosphate: step 2/6. Its pathway is isoprenoid biosynthesis; isopentenyl diphosphate biosynthesis via DXP pathway; isopentenyl diphosphate from 1-deoxy-D-xylulose 5-phosphate: step 4/6. Bifunctional enzyme that catalyzes the formation of 4-diphosphocytidyl-2-C-methyl-D-erythritol from CTP and 2-C-methyl-D-erythritol 4-phosphate (MEP) (IspD), and catalyzes the conversion of 4-diphosphocytidyl-2-C-methyl-D-erythritol 2-phosphate (CDP-ME2P) to 2-C-methyl-D-erythritol 2,4-cyclodiphosphate (ME-CPP) with a corresponding release of cytidine 5-monophosphate (CMP) (IspF). This Rhizobium leguminosarum bv. trifolii (strain WSM2304) protein is Bifunctional enzyme IspD/IspF.